Reading from the N-terminus, the 488-residue chain is Cysteine--tRNA ligase (488 aa).

Cys29 is a binding site for Zn(2+). The 'HIGH' region signature appears at 31-41; it reads ATVQGMPHVGH. Zn(2+)-binding residues include Cys227, His252, and Glu256. A 'KMSKS' region motif is present at residues 283 to 287; it reads KMSKS. Lys286 is an ATP binding site.

Belongs to the class-I aminoacyl-tRNA synthetase family. Monomer. Zn(2+) is required as a cofactor.

It is found in the cytoplasm. The catalysed reaction is tRNA(Cys) + L-cysteine + ATP = L-cysteinyl-tRNA(Cys) + AMP + diphosphate. The polypeptide is Cysteine--tRNA ligase (Pseudarthrobacter chlorophenolicus (strain ATCC 700700 / DSM 12829 / CIP 107037 / JCM 12360 / KCTC 9906 / NCIMB 13794 / A6) (Arthrobacter chlorophenolicus)).